The chain runs to 822 residues: Glycerol-3-phosphate acyltransferase (822 aa).

The short motif at 304–309 is the HXXXXD motif element; the sequence is CHRSHM.

The protein belongs to the GPAT/DAPAT family.

The protein localises to the cell inner membrane. The enzyme catalyses sn-glycerol 3-phosphate + an acyl-CoA = a 1-acyl-sn-glycero-3-phosphate + CoA. The protein operates within phospholipid metabolism; CDP-diacylglycerol biosynthesis; CDP-diacylglycerol from sn-glycerol 3-phosphate: step 1/3. This chain is Glycerol-3-phosphate acyltransferase, found in Yersinia enterocolitica serotype O:8 / biotype 1B (strain NCTC 13174 / 8081).